The following is a 198-amino-acid chain: ATP-dependent Clp protease proteolytic subunit 1 (198 aa).

Ser-98 (nucleophile) is an active-site residue. His-123 is an active-site residue.

The protein belongs to the peptidase S14 family. As to quaternary structure, fourteen ClpP subunits assemble into 2 heptameric rings which stack back to back to give a disk-like structure with a central cavity, resembling the structure of eukaryotic proteasomes.

It is found in the cytoplasm. The catalysed reaction is Hydrolysis of proteins to small peptides in the presence of ATP and magnesium. alpha-casein is the usual test substrate. In the absence of ATP, only oligopeptides shorter than five residues are hydrolyzed (such as succinyl-Leu-Tyr-|-NHMec, and Leu-Tyr-Leu-|-Tyr-Trp, in which cleavage of the -Tyr-|-Leu- and -Tyr-|-Trp bonds also occurs).. Its function is as follows. Cleaves peptides in various proteins in a process that requires ATP hydrolysis. Has a chymotrypsin-like activity. Plays a major role in the degradation of misfolded proteins. The polypeptide is ATP-dependent Clp protease proteolytic subunit 1 (Leptospira interrogans serogroup Icterohaemorrhagiae serovar copenhageni (strain Fiocruz L1-130)).